We begin with the raw amino-acid sequence, 89 residues long: Small ribosomal subunit protein uS15 (89 aa).

The protein belongs to the universal ribosomal protein uS15 family. Part of the 30S ribosomal subunit. Forms a bridge to the 50S subunit in the 70S ribosome, contacting the 23S rRNA.

Its function is as follows. One of the primary rRNA binding proteins, it binds directly to 16S rRNA where it helps nucleate assembly of the platform of the 30S subunit by binding and bridging several RNA helices of the 16S rRNA. In terms of biological role, forms an intersubunit bridge (bridge B4) with the 23S rRNA of the 50S subunit in the ribosome. In Nocardia farcinica (strain IFM 10152), this protein is Small ribosomal subunit protein uS15.